The sequence spans 244 residues: tRNA (guanine-N(7)-)-methyltransferase (244 aa).

Residues 1 to 11 are compositionally biased toward pro residues; the sequence is MTDTHVPPPEL. Residues 1–23 are disordered; the sequence is MTDTHVPPPELPAAEEGEERPHR. S-adenosyl-L-methionine is bound by residues glutamate 74, glutamate 99, aspartate 126, and aspartate 149. Aspartate 149 is a catalytic residue. Residues lysine 153, aspartate 185, and 222–225 each bind substrate; that span reads TKFE.

The protein belongs to the class I-like SAM-binding methyltransferase superfamily. TrmB family.

It catalyses the reaction guanosine(46) in tRNA + S-adenosyl-L-methionine = N(7)-methylguanosine(46) in tRNA + S-adenosyl-L-homocysteine. Its pathway is tRNA modification; N(7)-methylguanine-tRNA biosynthesis. Its function is as follows. Catalyzes the formation of N(7)-methylguanine at position 46 (m7G46) in tRNA. This Pseudomonas syringae pv. tomato (strain ATCC BAA-871 / DC3000) protein is tRNA (guanine-N(7)-)-methyltransferase.